Consider the following 255-residue polypeptide: Short chain dehydrogenase adrF (255 aa).

NADP(+) is bound by residues I11, R118, Y150, K154, and V183. Y150 functions as the Proton acceptor in the catalytic mechanism. Catalysis depends on K154, which acts as the Lowers pKa of active site Tyr.

The protein belongs to the short-chain dehydrogenases/reductases (SDR) family.

Its pathway is secondary metabolite biosynthesis; terpenoid biosynthesis. Short chain dehydrogenase; part of the gene cluster that mediates the biosynthesis of andrastins, meroterpenoid compounds that exhibit inhibitory activity against ras farnesyltransferase, suggesting that they could be promising leads for antitumor agents. The first step of the pathway is the synthesis of 3,5-dimethylorsellinic acid (DMOA) by the polyketide synthase adrD via condensation of one acetyl-CoA starter unit with 3 malonyl-CoA units and 2 methylations. DMAO is then converted to farnesyl-DMAO by the prenyltransferase adrG. The methyltransferase adrK catalyzes the methylation of the carboxyl group of farnesyl-DMAO to farnesyl-DMAO methyl ester which is further converted to epoxyfarnesyl-DMAO methyl ester by the FAD-dependent monooxygenase adrH. The terpene cyclase adrI then catalyzes the carbon skeletal rearrangement to generate the andrastin E, the first compound in the pathway having the andrastin scaffold, with the tetracyclic ring system. The post-cyclization tailoring enzymes adrF, adrE, adrJ, and adrA, are involved in the conversion of andrastin E into andrastin A. The short chain dehydrogenase adrF is responsible for the oxidation of the C-3 a hydroxyl group of andrastin E to yield the corresponding ketone, andrastin D. The ketoreductase adrE stereoselectively reduces the carbonyl moiety to reverse the stereochemistry of the C-3 position to yield andrastin F. The acetyltransferase adrJ is the acetyltransferase that attaches the acetyl group to the C-3 hydroxyl group of andrastin F to yield andrastin C. Finally, the cytochrome P450 monooxygenase adrA catalyzes two sequential oxidation reactions of the C-23 methyl group, to generate the corresponding alcohol andrastin B, and aldehyde andrastin A. The protein is Short chain dehydrogenase adrF of Penicillium rubens (strain ATCC 28089 / DSM 1075 / NRRL 1951 / Wisconsin 54-1255) (Penicillium chrysogenum).